Reading from the N-terminus, the 211-residue chain is tRNA (guanine-N(7)-)-methyltransferase (211 aa).

S-adenosyl-L-methionine-binding residues include E43, D68, and N117. Residues K121, D153, and 190–193 each bind substrate; that span reads TEYE.

It belongs to the class I-like SAM-binding methyltransferase superfamily. TrmB family.

It carries out the reaction guanosine(46) in tRNA + S-adenosyl-L-methionine = N(7)-methylguanosine(46) in tRNA + S-adenosyl-L-homocysteine. Its pathway is tRNA modification; N(7)-methylguanine-tRNA biosynthesis. In terms of biological role, catalyzes the formation of N(7)-methylguanine at position 46 (m7G46) in tRNA. This is tRNA (guanine-N(7)-)-methyltransferase from Clostridium acetobutylicum (strain ATCC 824 / DSM 792 / JCM 1419 / IAM 19013 / LMG 5710 / NBRC 13948 / NRRL B-527 / VKM B-1787 / 2291 / W).